The following is a 172-amino-acid chain: Protein nemuri (172 aa).

Positions 1-25 are cleaved as a signal peptide; the sequence is MSAKYTLIFALAALCCLVFSTEAAA. Positions 27–172 are disordered; it reads RSRVLSSRRG…KRRSGKGNKA (146 aa). Composition is skewed to basic and acidic residues over residues 35–50, 58–90, and 97–108; these read RGSE…KEDS, DLER…DKET, and TIVKPNKDDARA. A coiled-coil region spans residues 45 to 74; sequence DNKEDSELAAQEQDLERQEQEEQNDRLEGR. Positions 109-172 are enriched in basic residues; sequence RRIVRAGRRR…KRRSGKGNKA (64 aa).

As to expression, detected in the brain where it accumulates in the dorsal fan-shaped body following sleep deprivation (at protein level). Expressed in the adult body.

Its subcellular location is the secreted. Functionally, antimicrobial protein which is essential for the homeostatic regulation of sleep. Promotes sleep following sleep deprivation or bacterial infection and increases survival following bacterial infection. Likely to promote survival to bacterial infection in two ways; by contributing to the innate immune response and by promoting sleep during sickness to aid recovery. The sequence is that of Protein nemuri from Drosophila melanogaster (Fruit fly).